A 263-amino-acid polypeptide reads, in one-letter code: MNVDIDTETGSSFSITIDFGETVLQIKEKIEKSQGIPVSKQILYLDGKALEDDLHKIDYMILFESLLLRISPDADPNQSNEQTEQSKQIDDKKQEFCGIQDSSESKKLTRVMARRVHNVYSSLPAYSLDELLGPKYSATVTVGGRTNQVVQTTEQASTSGTAKEVLRDSDSPVEKKIKTNPMKFTVHVKPYQEDTKMIQVEVNADDNVEELRKELVKMQERGELNLPHEAFHLVSSELPLIETKSFKWNRVADGDTIELIREK.

One can recognise a Ubiquitin-like 1 domain in the interval 1-53 (MNVDIDTETGSSFSITIDFGETVLQIKEKIEKSQGIPVSKQILYLDGKALEDD). The segment at 74–93 (ADPNQSNEQTEQSKQIDDKK) is disordered. A compositionally biased stretch (polar residues) spans 76–86 (PNQSNEQTEQS). In terms of domain architecture, Ubiquitin-like 2 spans 184 to 263 (FTVHVKPYQE…GDTIELIREK (80 aa)).

The protein belongs to the ubiquitin family. Expressed in seedlings, roots, stems, rosettes and flowers (at protein level).

It localises to the nucleus. In terms of biological role, controls phase transition from the vegetative to the reproductive state. Involved in the maintenance of the shoot apical meristem (SAM) thus preventing inflorescence meristem (IM) formation and subsequent inflorescence stem development during flowering. Regulates leaf and organ morphology. The sequence is that of Ubiquitin domain-containing protein 7SL RNA2 from Arabidopsis thaliana (Mouse-ear cress).